Consider the following 189-residue polypeptide: RNA-binding protein (189 aa).

A C4-type zinc finger spans residues 55–69 (CICPSSNHLVDDCVC). The disordered stretch occupies residues 114-189 (FLTSVNPGES…DANTRKSKRK (76 aa)). Residues 158–167 (SSSERKRKEY) are compositionally biased toward basic and acidic residues. A compositionally biased stretch (low complexity) spans 168–180 (SSNSETDLSSDSD).

This sequence belongs to the phytoreovirus RNA-binding protein family.

The protein localises to the host cytoplasm. Functionally, constituent of viral factories. Binds to ssRNA and dsRNA. The sequence is that of RNA-binding protein from Alopecurus aequalis (Barnyard grass).